We begin with the raw amino-acid sequence, 106 residues long: UPF0145 protein BF0270 (106 aa).

Belongs to the UPF0145 family.

The chain is UPF0145 protein BF0270 from Bacteroides fragilis (strain YCH46).